Reading from the N-terminus, the 245-residue chain is Tryptophan synthase alpha chain (245 aa).

Active-site proton acceptor residues include E37 and D48.

Belongs to the TrpA family. In terms of assembly, tetramer of two alpha and two beta chains.

The catalysed reaction is (1S,2R)-1-C-(indol-3-yl)glycerol 3-phosphate + L-serine = D-glyceraldehyde 3-phosphate + L-tryptophan + H2O. It functions in the pathway amino-acid biosynthesis; L-tryptophan biosynthesis; L-tryptophan from chorismate: step 5/5. The alpha subunit is responsible for the aldol cleavage of indoleglycerol phosphate to indole and glyceraldehyde 3-phosphate. This Saccharolobus solfataricus (strain ATCC 35092 / DSM 1617 / JCM 11322 / P2) (Sulfolobus solfataricus) protein is Tryptophan synthase alpha chain.